The sequence spans 2082 residues: Probable ATP-dependent helicase PF08_0048 (2082 aa).

Residues 66–138 form the HSA domain; that stretch reads KIVEPAKTPE…EEKRLKLYSK (73 aa). Residues 209–221 show a composition bias toward low complexity; that stretch reads NNSEIVNNNASSV. Disordered stretches follow at residues 209-234 and 301-470; these read NNSE…DDLT and NVIE…SPTR. 2 stretches are compositionally biased toward basic and acidic residues: residues 419 to 448 and 455 to 465; these read NSDH…HIDN and TGEDYKSDKEN. Residues 476–531 are a coiled coil; it reads KKEKYDEYDTKLKIEKREEENKNYEKDEHEYESDNYDKEKINKKKELILLKNDIEN. The tract at residues 532–641 is disordered; that stretch reads DSDETSEHIK…KNDSDDNDDI (110 aa). A compositionally biased stretch (basic and acidic residues) spans 536-545; sequence TSEHIKRDSR. Residues 579–598 are compositionally biased toward low complexity; sequence DNNNSENDNNNDNNNDNNND. Residues 599 to 627 show a composition bias toward acidic residues; sequence NNDDNNDDNNDDNNDDNNDDNNDDNNDDN. A Helicase ATP-binding domain is found at 674-839; that stretch reads LYLYKNNING…WSLLHFLMPN (166 aa). 687–694 contributes to the ATP binding site; it reads DEMGLGKT. The DEAH box motif lies at 790–793; sequence DEAH. Positions 1199–1255 are disordered; sequence EQNNNNSKDNNNNIDNNNNIDNNNNIDNNNNIDNNNNIDNNNNNIDNNNNIDNHHNN. Residues 1772–1922 form the Helicase C-terminal domain; that stretch reads ALEKLLSKCK…NICINMGNFN (151 aa). The stretch at 1972–2060 forms a coiled coil; sequence EQVENKDKMN…DEMRMKIEIE (89 aa).

This sequence belongs to the SNF2/RAD54 helicase family. SWR1 subfamily. As to quaternary structure, component of a chromatin-remodeling complex.

It is found in the nucleus. Catalytic component of a chromatin remodeling complex. This chain is Probable ATP-dependent helicase PF08_0048, found in Plasmodium falciparum (isolate 3D7).